Here is a 178-residue protein sequence, read N- to C-terminus: Large ribosomal subunit protein uL6 (178 aa).

This sequence belongs to the universal ribosomal protein uL6 family. In terms of assembly, part of the 50S ribosomal subunit.

Functionally, this protein binds to the 23S rRNA, and is important in its secondary structure. It is located near the subunit interface in the base of the L7/L12 stalk, and near the tRNA binding site of the peptidyltransferase center. The chain is Large ribosomal subunit protein uL6 from Listeria innocua serovar 6a (strain ATCC BAA-680 / CLIP 11262).